The primary structure comprises 155 residues: Small ribosomal subunit protein uS7 (155 aa).

Belongs to the universal ribosomal protein uS7 family. In terms of assembly, part of the 30S ribosomal subunit. Contacts proteins S9 and S11.

Its function is as follows. One of the primary rRNA binding proteins, it binds directly to 16S rRNA where it nucleates assembly of the head domain of the 30S subunit. Is located at the subunit interface close to the decoding center, probably blocks exit of the E-site tRNA. In Thermosipho melanesiensis (strain DSM 12029 / CIP 104789 / BI429), this protein is Small ribosomal subunit protein uS7.